A 464-amino-acid polypeptide reads, in one-letter code: ATP synthase subunit beta (464 aa).

Residue 152–159 (GGAGVGKS) participates in ATP binding.

It belongs to the ATPase alpha/beta chains family. As to quaternary structure, F-type ATPases have 2 components, CF(1) - the catalytic core - and CF(0) - the membrane proton channel. CF(1) has five subunits: alpha(3), beta(3), gamma(1), delta(1), epsilon(1). CF(0) has three main subunits: a(1), b(2) and c(9-12). The alpha and beta chains form an alternating ring which encloses part of the gamma chain. CF(1) is attached to CF(0) by a central stalk formed by the gamma and epsilon chains, while a peripheral stalk is formed by the delta and b chains.

It is found in the cell membrane. It catalyses the reaction ATP + H2O + 4 H(+)(in) = ADP + phosphate + 5 H(+)(out). Functionally, produces ATP from ADP in the presence of a proton gradient across the membrane. The catalytic sites are hosted primarily by the beta subunits. The chain is ATP synthase subunit beta from Protochlamydia amoebophila (strain UWE25).